The sequence spans 88 residues: Small ribosomal subunit protein bS20 (88 aa).

A disordered region spans residues 1-21; sequence MANTTSAKKATRKIARRTAVN.

The protein belongs to the bacterial ribosomal protein bS20 family.

In terms of biological role, binds directly to 16S ribosomal RNA. In Sinorhizobium fredii (strain NBRC 101917 / NGR234), this protein is Small ribosomal subunit protein bS20.